Reading from the N-terminus, the 375-residue chain is Homoserine O-succinyltransferase (375 aa).

The AB hydrolase-1 domain occupies 48–358 (NAVLVCHALS…PAGHDSFLLD (311 aa)). Residue serine 154 is the Nucleophile of the active site. Substrate is bound at residue arginine 224. Catalysis depends on residues aspartate 319 and histidine 352. Aspartate 353 contacts substrate.

The protein belongs to the AB hydrolase superfamily. MetX family. As to quaternary structure, homodimer.

It localises to the cytoplasm. The enzyme catalyses L-homoserine + succinyl-CoA = O-succinyl-L-homoserine + CoA. It participates in amino-acid biosynthesis; L-methionine biosynthesis via de novo pathway; O-succinyl-L-homoserine from L-homoserine: step 1/1. Its function is as follows. Transfers a succinyl group from succinyl-CoA to L-homoserine, forming succinyl-L-homoserine. The chain is Homoserine O-succinyltransferase from Azoarcus sp. (strain BH72).